The chain runs to 487 residues: PPE family protein PPE10 (487 aa).

Residues 398 to 424 show a composition bias toward low complexity; it reads APVGGLDSGNPNPGSGSAAAGSGANPG. The disordered stretch occupies residues 398–487; that stretch reads APVGGLDSGN…PRIGQPVGSE (90 aa). Over residues 428–446 the composition is skewed to polar residues; the sequence is PGTSYPSFVNSGSNDSGLR.

This sequence belongs to the mycobacterial PPE family.

It is found in the secreted. In terms of biological role, plays a major role in the integrity and stability of the capsule. The protein is PPE family protein PPE10 (PPE10) of Mycobacterium tuberculosis (strain CDC 1551 / Oshkosh).